The primary structure comprises 558 residues: Potassium-transporting ATPase potassium-binding subunit (558 aa).

Helical transmembrane passes span 1–21 (MEII…SGYL), 66–86 (FNGF…WLFL), 127–147 (MIVM…VCIA), 166–186 (IVRF…ILLM), 245–265 (IWSN…MLFL), 281–301 (ALIL…LTMW), 327–347 (FGAG…TGSV), 354–374 (LTPL…VFGG), 377–397 (VGLM…SLMV), 416–436 (IVLV…LAFM), 482–502 (ISTG…QLMI), and 531–551 (IVFI…LGPI).

Belongs to the KdpA family. As to quaternary structure, the system is composed of three essential subunits: KdpA, KdpB and KdpC.

The protein localises to the cell membrane. Its function is as follows. Part of the high-affinity ATP-driven potassium transport (or Kdp) system, which catalyzes the hydrolysis of ATP coupled with the electrogenic transport of potassium into the cytoplasm. This subunit binds the extracellular potassium ions and delivers the ions to the membrane domain of KdpB through an intramembrane tunnel. The chain is Potassium-transporting ATPase potassium-binding subunit from Staphylococcus aureus (strain MSSA476).